The primary structure comprises 440 residues: Chromosome partition protein MukF (440 aa).

Residues L208–I236 are leucine-zipper.

It belongs to the MukF family. As to quaternary structure, interacts, and probably forms a ternary complex, with MukE and MukB via its C-terminal region. The complex formation is stimulated by calcium or magnesium. It is required for an interaction between MukE and MukB.

It is found in the cytoplasm. The protein resides in the nucleoid. Functionally, involved in chromosome condensation, segregation and cell cycle progression. May participate in facilitating chromosome segregation by condensation DNA from both sides of a centrally located replisome during cell division. Not required for mini-F plasmid partitioning. Probably acts via its interaction with MukB and MukE. Overexpression results in anucleate cells. It has a calcium binding activity. The chain is Chromosome partition protein MukF from Escherichia fergusonii (strain ATCC 35469 / DSM 13698 / CCUG 18766 / IAM 14443 / JCM 21226 / LMG 7866 / NBRC 102419 / NCTC 12128 / CDC 0568-73).